The chain runs to 445 residues: Ribosomal protein uS12 methylthiotransferase RimO (445 aa).

One can recognise an MTTase N-terminal domain in the interval leucine 4 to asparagine 119. [4Fe-4S] cluster is bound by residues cysteine 13, cysteine 48, cysteine 82, cysteine 156, cysteine 160, and cysteine 163. The Radical SAM core domain maps to threonine 142 to asparagine 372. The TRAM domain maps to alanine 375–asparagine 441.

This sequence belongs to the methylthiotransferase family. RimO subfamily. [4Fe-4S] cluster serves as cofactor.

Its subcellular location is the cytoplasm. The catalysed reaction is L-aspartate(89)-[ribosomal protein uS12]-hydrogen + (sulfur carrier)-SH + AH2 + 2 S-adenosyl-L-methionine = 3-methylsulfanyl-L-aspartate(89)-[ribosomal protein uS12]-hydrogen + (sulfur carrier)-H + 5'-deoxyadenosine + L-methionine + A + S-adenosyl-L-homocysteine + 2 H(+). Functionally, catalyzes the methylthiolation of an aspartic acid residue of ribosomal protein uS12. The chain is Ribosomal protein uS12 methylthiotransferase RimO from Clostridium acetobutylicum (strain ATCC 824 / DSM 792 / JCM 1419 / IAM 19013 / LMG 5710 / NBRC 13948 / NRRL B-527 / VKM B-1787 / 2291 / W).